Consider the following 204-residue polypeptide: Large ribosomal subunit protein bL25 (204 aa).

The protein belongs to the bacterial ribosomal protein bL25 family. CTC subfamily. As to quaternary structure, part of the 50S ribosomal subunit; part of the 5S rRNA/L5/L18/L25 subcomplex. Contacts the 5S rRNA. Binds to the 5S rRNA independently of L5 and L18.

In terms of biological role, this is one of the proteins that binds to the 5S RNA in the ribosome where it forms part of the central protuberance. The chain is Large ribosomal subunit protein bL25 from Burkholderia mallei (strain NCTC 10247).